The chain runs to 126 residues: Large ribosomal subunit protein uL22 (126 aa).

This sequence belongs to the universal ribosomal protein uL22 family. Part of the 50S ribosomal subunit.

Its function is as follows. This protein binds specifically to 23S rRNA; its binding is stimulated by other ribosomal proteins, e.g. L4, L17, and L20. It is important during the early stages of 50S assembly. It makes multiple contacts with different domains of the 23S rRNA in the assembled 50S subunit and ribosome. In terms of biological role, the globular domain of the protein is located near the polypeptide exit tunnel on the outside of the subunit, while an extended beta-hairpin is found that lines the wall of the exit tunnel in the center of the 70S ribosome. This is Large ribosomal subunit protein uL22 from Cereibacter sphaeroides (strain ATCC 17029 / ATH 2.4.9) (Rhodobacter sphaeroides).